We begin with the raw amino-acid sequence, 220 residues long: Deep-sea actinoporin Cjtox I (220 aa).

Residues 1-19 form the signal peptide; the sequence is MNRLIILCLVAATIYSTIA. A propeptide spanning residues 20–42 is cleaved from the precursor; sequence LPMKEDISNEERPTSVNEKPVKK. Phosphocholine-binding residues include Ser-96, Val-128, Ser-146, Pro-148, Tyr-174, Tyr-178, and Tyr-179. The trp-rich region, which is important for the binding to lipid membrane stretch occupies residues 146–161; the sequence is SVPYDYNWYSNWWNIK. The Cell attachment site, crucial for protein stability motif lies at 185–187; the sequence is KGN.

Belongs to the actinoporin family. Sea anemone subfamily. Octamer or nonamer in membranes. Monomer in the soluble state. In terms of tissue distribution, expressed in tentacles.

It is found in the secreted. Its subcellular location is the nematocyst. The protein resides in the target cell membrane. In terms of biological role, probably acts in predation. Pore-forming protein that forms cations-selective hydrophilic pores of around 1 nm and causes cytolysis. Pore formation is a multi-step process that involves specific recognition of membrane sphingomyelin (but neither cholesterol nor phosphatidylcholine) using aromatic rich region and adjacent phosphocholine (POC) binding site, firm binding to the membrane (mainly driven by hydrophobic interactions) accompanied by the transfer of the N-terminal region to the lipid-water interface and finally pore formation after oligomerization of monomers. Shows hemolytic activity on equine erythrocytes. Hemolysis is moderately inhibited in presence of sphingomyelin, suggesting that this protein targets sphingomyelin. The chain is Deep-sea actinoporin Cjtox I from Cribrinopsis japonica (Deep-sea anemone).